A 391-amino-acid polypeptide reads, in one-letter code: MQLLFVHDFPVEKYKDNYYSIGFSHKIWNRYLTIFDKMLINSRVKNVDNGEIINKSNGEKVNFKTIDSYKSPKSLIFKHKKIFEALTISIKKSDGVLIRVPSVLGFIAALICKKINKPYMVEVVGAAFDAYWFHGSIFGKILSLPMEYLQKNAVKNASIAIYVTKKYLSNKYPCNGKEFKGISNVQSVEKFNKNLDIGNKIKIGLIGSTFVDYKGHNVAIKSISNLVNEGYNIELEFVGDGPSKKFMEMAKKYNVENNVIFKGKIYDKTALNNWFRNLDLYIQPSLTEGHCRAIVEAIGNGVPTLASNAGGNSDSVNKEYLFKPKDVVKLTKLINRSILSKQYREENVLENKKNISGYNLENIQIEREKALLNYKKIINDFYLAKGINKNA.

Its pathway is capsule biogenesis; capsule polysaccharide biosynthesis. Functionally, required for the biosynthesis of type 1 capsular polysaccharide. The protein is Protein CapJ (capJ) of Staphylococcus aureus.